The following is a 529-amino-acid chain: Glycylpeptide N-tetradecanoyltransferase 2 (529 aa).

Residues 1 to 82 (MAEDSESAAS…QEIKIQQSSK (82 aa)) form a disordered region. Residues 15-32 (ELDDQDTCGIDGDNEEET) are compositionally biased toward acidic residues. Residue Ser-38 is modified to Phosphoserine. Over residues 46 to 57 (KKKKKKQKRKKE) the composition is skewed to basic residues. Residues 61–82 (SGGTKSDSASDSQEIKIQQSSK) show a composition bias toward polar residues. The tetradecanoyl-CoA site is built by Trp-153, Leu-281, Val-283, Ser-289, Arg-291, Val-292, and Ala-293.

The protein belongs to the NMT family.

The protein localises to the cytoplasm. Its subcellular location is the membrane. It carries out the reaction N-terminal glycyl-[protein] + tetradecanoyl-CoA = N-tetradecanoylglycyl-[protein] + CoA + H(+). The enzyme catalyses N-terminal glycyl-L-lysyl-[protein] + tetradecanoyl-CoA = N-terminal glycyl-(N(6)-tetradecanoyl)-L-lysyl-[protein] + CoA + H(+). Adds a myristoyl group to the N-terminal glycine residue of certain cellular and viral proteins. Also able to mediate N-terminal lysine myristoylation of proteins: catalyzes myristoylation of ARF6 on both 'Gly-2' and 'Lys-3'. Lysine myristoylation is required to maintain ARF6 on membranes during the GTPase cycle. The protein is Glycylpeptide N-tetradecanoyltransferase 2 (Nmt2) of Mus musculus (Mouse).